A 100-amino-acid polypeptide reads, in one-letter code: Large ribosomal subunit protein eL30 (100 aa).

It belongs to the eukaryotic ribosomal protein eL30 family.

The chain is Large ribosomal subunit protein eL30 from Thermococcus sibiricus (strain DSM 12597 / MM 739).